The following is a 242-amino-acid chain: 1-(5-phosphoribosyl)-5-[(5-phosphoribosylamino)methylideneamino] imidazole-4-carboxamide isomerase (242 aa).

Catalysis depends on aspartate 8, which acts as the Proton acceptor. Aspartate 129 functions as the Proton donor in the catalytic mechanism.

Belongs to the HisA/HisF family.

The protein localises to the cytoplasm. It carries out the reaction 1-(5-phospho-beta-D-ribosyl)-5-[(5-phospho-beta-D-ribosylamino)methylideneamino]imidazole-4-carboxamide = 5-[(5-phospho-1-deoxy-D-ribulos-1-ylimino)methylamino]-1-(5-phospho-beta-D-ribosyl)imidazole-4-carboxamide. It functions in the pathway amino-acid biosynthesis; L-histidine biosynthesis; L-histidine from 5-phospho-alpha-D-ribose 1-diphosphate: step 4/9. The sequence is that of 1-(5-phosphoribosyl)-5-[(5-phosphoribosylamino)methylideneamino] imidazole-4-carboxamide isomerase from Syntrophus aciditrophicus (strain SB).